A 332-amino-acid chain; its full sequence is Ribosomal RNA small subunit methyltransferase H (332 aa).

Residues Gly-38–Tyr-40, Asp-56, Phe-83, Asp-104, and Gln-111 contribute to the S-adenosyl-L-methionine site. The interval Thr-309–Ala-332 is disordered.

Belongs to the methyltransferase superfamily. RsmH family.

It localises to the cytoplasm. The enzyme catalyses cytidine(1402) in 16S rRNA + S-adenosyl-L-methionine = N(4)-methylcytidine(1402) in 16S rRNA + S-adenosyl-L-homocysteine + H(+). Functionally, specifically methylates the N4 position of cytidine in position 1402 (C1402) of 16S rRNA. The sequence is that of Ribosomal RNA small subunit methyltransferase H from Zymomonas mobilis subsp. mobilis (strain ATCC 31821 / ZM4 / CP4).